Here is a 210-residue protein sequence, read N- to C-terminus: Putative biopolymer transport protein ExbB-like 3 (210 aa).

The next 3 membrane-spanning stretches (helical) occupy residues 2-22 (AGGI…ALII), 104-124 (LFQT…ILGL), and 152-172 (LVST…ANVF).

Belongs to the ExbB/TolQ family.

It localises to the cell inner membrane. In terms of biological role, involved in the TonB-dependent energy-dependent transport of various receptor-bound substrates. Protects ExbD from proteolytic degradation and functionally stabilizes TonB. This chain is Putative biopolymer transport protein ExbB-like 3, found in Synechocystis sp. (strain ATCC 27184 / PCC 6803 / Kazusa).